The chain runs to 593 residues: uncharacterized protein (593 aa).

This is an uncharacterized protein from Sinorhizobium fredii (strain NBRC 101917 / NGR234).